The chain runs to 259 residues: Diphthine synthase (259 aa).

Residues leucine 9, aspartate 85, valine 88, 113–114 (TA), leucine 168, alanine 209, and histidine 234 each bind S-adenosyl-L-methionine.

It belongs to the diphthine synthase family. Homodimer.

The enzyme catalyses 2-[(3S)-amino-3-carboxypropyl]-L-histidyl-[translation elongation factor 2] + 3 S-adenosyl-L-methionine = diphthine-[translation elongation factor 2] + 3 S-adenosyl-L-homocysteine + 3 H(+). It functions in the pathway protein modification; peptidyl-diphthamide biosynthesis. S-adenosyl-L-methionine-dependent methyltransferase that catalyzes the trimethylation of the amino group of the modified target histidine residue in translation elongation factor 2 (EF-2), to form an intermediate called diphthine. The three successive methylation reactions represent the second step of diphthamide biosynthesis. In Haloarcula marismortui (strain ATCC 43049 / DSM 3752 / JCM 8966 / VKM B-1809) (Halobacterium marismortui), this protein is Diphthine synthase.